Reading from the N-terminus, the 444-residue chain is ATP-dependent RNA helicase SrmB (444 aa).

The Q motif signature appears at 4–32 (TTFSELELDESLLEALQDKGFTRPTAIQA). Residues 35–209 (IPPALDGRDV…AERLLEDPVE (175 aa)) form the Helicase ATP-binding domain. ATP is bound at residue 48–55 (APTGTGKT). A DEAD box motif is present at residues 157-160 (DEAD). Positions 238 to 387 (LLVHLLKQPE…ELRPKTRAPS (150 aa)) constitute a Helicase C-terminal domain. Residues 382–391 (KTRAPSEKQT) show a composition bias toward basic and acidic residues. Positions 382–444 (KTRAPSEKQT…TGVPPQTTEE (63 aa)) are disordered. 2 stretches are compositionally biased toward basic residues: residues 394–406 (PSKK…AEKK) and 414–432 (PRVK…RRKP).

This sequence belongs to the DEAD box helicase family. SrmB subfamily. Interacts with the 50S ribosomal subunit. Forms a complex with the 50S ribosomal proteins L4 and L24, and a region near the 5'-end of 23S rRNA.

It localises to the cytoplasm. The enzyme catalyses ATP + H2O = ADP + phosphate + H(+). Its function is as follows. DEAD-box RNA helicase involved in the assembly of the 50S ribosomal subunit at low temperature. Exhibits RNA-stimulated ATP hydrolysis and RNA unwinding activity. Acts before DeaD. The polypeptide is ATP-dependent RNA helicase SrmB (Escherichia coli (strain K12)).